We begin with the raw amino-acid sequence, 111 residues long: DNA-directed RNA polymerase subunit Rpo11 (111 aa).

This sequence belongs to the archaeal Rpo11/eukaryotic RPB11/RPC19 RNA polymerase subunit family. As to quaternary structure, part of the RNA polymerase complex.

The protein resides in the cytoplasm. It catalyses the reaction RNA(n) + a ribonucleoside 5'-triphosphate = RNA(n+1) + diphosphate. DNA-dependent RNA polymerase (RNAP) catalyzes the transcription of DNA into RNA using the four ribonucleoside triphosphates as substrates. The chain is DNA-directed RNA polymerase subunit Rpo11 from Thermoplasma acidophilum (strain ATCC 25905 / DSM 1728 / JCM 9062 / NBRC 15155 / AMRC-C165).